Here is a 171-residue protein sequence, read N- to C-terminus: Protein phosphatase 1 regulatory subunit 1A (171 aa).

An N-acetylmethionine modification is found at Met-1. The tract at residues 1 to 171 is disordered; sequence MEQDNSPRKI…PLDSKGANSV (171 aa). Positions 9-12 are essential for activity; it reads KIQF. Positions 19–29 are enriched in basic and acidic residues; the sequence is PHLDPEAAEQI. Thr-35 is modified (phosphothreonine; by PKA). The interval 42–54 is essential for activity; that stretch reads TSDQSSPEIDEDR. A phosphoserine mark is found at Ser-43, Ser-46, Ser-47, and Ser-67. The span at 135-157 shows a compositional bias: basic and acidic residues; the sequence is KTAECIPKTHERGSKEPSTKEPS. Residues 143–171 are interaction with PPP1R15A; the sequence is THERGSKEPSTKEPSTHIPPLDSKGANSV.

This sequence belongs to the protein phosphatase inhibitor 1 family. Interacts with PPP1R15A. Phosphorylation of Thr-35 is required for activity.

Functionally, inhibitor of protein-phosphatase 1. This protein may be important in hormonal control of glycogen metabolism. Hormones that elevate intracellular cAMP increase I-1 activity in many tissues. I-1 activation may impose cAMP control over proteins that are not directly phosphorylated by PKA. Following a rise in intracellular calcium, I-1 is inactivated by calcineurin (or PP2B). Does not inhibit type-2 phosphatases. The sequence is that of Protein phosphatase 1 regulatory subunit 1A (PPP1R1A) from Homo sapiens (Human).